The sequence spans 520 residues: Hydroxymethylglutaryl-CoA synthase, cytoplasmic (520 aa).

Phosphoserine is present on Ser-4. Positions 43 and 44 each coordinate (3S)-3-hydroxy-3-methylglutaryl-CoA. 44–46 serves as a coordination point for CoA; that stretch reads AGK. Lys-46 carries the N6-acetyllysine modification. Glu-95 serves as the catalytic Proton donor/acceptor. Cys-129, Asn-167, Thr-171, Ser-221, and His-264 together coordinate (3S)-3-hydroxy-3-methylglutaryl-CoA. The active-site Acyl-thioester intermediate is the Cys-129. Asn-167 provides a ligand contact to CoA. Ser-221 contributes to the CoA binding site. His-264 acts as the Proton donor/acceptor in catalysis. Positions 269 and 273 each coordinate CoA. Residues Lys-273, Asn-343, and Ser-377 each coordinate (3S)-3-hydroxy-3-methylglutaryl-CoA. At Lys-273 the chain carries N6-acetyllysine. A disordered region spans residues 486 to 520; the sequence is SNTATEHIPSPAKKVPRLPATAAESESAVISNGEH. Phosphoserine is present on residues Ser-495 and Ser-516.

The protein belongs to the thiolase-like superfamily. HMG-CoA synthase family. Homodimer.

It is found in the cytoplasm. The enzyme catalyses acetoacetyl-CoA + acetyl-CoA + H2O = (3S)-3-hydroxy-3-methylglutaryl-CoA + CoA + H(+). Its pathway is metabolic intermediate biosynthesis; (R)-mevalonate biosynthesis; (R)-mevalonate from acetyl-CoA: step 2/3. Its function is as follows. This enzyme condenses acetyl-CoA with acetoacetyl-CoA to form HMG-CoA, which is converted by HMG-CoA reductase (HMGCR) into mevalonate, a precursor for cholesterol synthesis. The sequence is that of Hydroxymethylglutaryl-CoA synthase, cytoplasmic from Cricetulus griseus (Chinese hamster).